The following is a 164-amino-acid chain: Thiol peroxidase (164 aa).

The region spanning 18 to 163 (VNEGDIAPNF…FEAALKAYRN (146 aa)) is the Thioredoxin domain. Catalysis depends on Cys60, which acts as the Cysteine sulfenic acid (-SOH) intermediate. Cys60 and Cys93 are disulfide-bonded.

The protein belongs to the peroxiredoxin family. Tpx subfamily. Homodimer.

The catalysed reaction is a hydroperoxide + [thioredoxin]-dithiol = an alcohol + [thioredoxin]-disulfide + H2O. Thiol-specific peroxidase that catalyzes the reduction of hydrogen peroxide and organic hydroperoxides to water and alcohols, respectively. Plays a role in cell protection against oxidative stress by detoxifying peroxides. This is Thiol peroxidase from Staphylococcus epidermidis (strain ATCC 35984 / DSM 28319 / BCRC 17069 / CCUG 31568 / BM 3577 / RP62A).